Consider the following 332-residue polypeptide: Glycerol-3-phosphate dehydrogenase [NAD(P)+] (332 aa).

Residues Trp-13, Lys-34, and Lys-108 each coordinate NADPH. The sn-glycerol 3-phosphate site is built by Lys-108, Gly-136, and Ser-138. NADPH is bound at residue Ala-140. Residues Lys-191, Asp-244, Ser-254, Arg-255, and Asn-256 each contribute to the sn-glycerol 3-phosphate site. Lys-191 (proton acceptor) is an active-site residue. Residue Arg-255 participates in NADPH binding. Val-279 and Glu-281 together coordinate NADPH.

It belongs to the NAD-dependent glycerol-3-phosphate dehydrogenase family.

It localises to the cytoplasm. It catalyses the reaction sn-glycerol 3-phosphate + NAD(+) = dihydroxyacetone phosphate + NADH + H(+). It carries out the reaction sn-glycerol 3-phosphate + NADP(+) = dihydroxyacetone phosphate + NADPH + H(+). It participates in membrane lipid metabolism; glycerophospholipid metabolism. In terms of biological role, catalyzes the reduction of the glycolytic intermediate dihydroxyacetone phosphate (DHAP) to sn-glycerol 3-phosphate (G3P), the key precursor for phospholipid synthesis. The sequence is that of Glycerol-3-phosphate dehydrogenase [NAD(P)+] from Francisella tularensis subsp. holarctica (strain FTNF002-00 / FTA).